Consider the following 307-residue polypeptide: 2,4-diacetylphloroglucinol hydrolase (307 aa).

Zn(2+)-binding residues include His-142, Glu-173, His-283, and Glu-287.

The protein belongs to the DAPG/phloretin hydrolase family. It depends on Zn(2+) as a cofactor.

The catalysed reaction is 2,4-diacetylphloroglucinol + H2O = 2-acetylphloroglucinol + acetate. With respect to regulation, activity is strongly reduced by pyoluteorin, an antifungal compound produced by the bacterium. Its function is as follows. Hydrolase that specifically degrades the potent antimicrobial compound 2,4-diacetylphloroglucinol (DAPG) to equimolar amounts of mildly toxic monoacetylphloroglucinol (MAPG) and acetate. Does not degrade other compounds with structures similar to DAPG, such as MAPG and triacetylphloroglucinol, suggesting strict substrate specificity. Degradation of DAPG to MAPG may provide an additional means of fine-tuning levels of this antibiotic or may help avoid accumulation of a metabolite that at high levels may become toxic to the producing bacterium. The sequence is that of 2,4-diacetylphloroglucinol hydrolase from Pseudomonas protegens (strain DSM 19095 / LMG 27888 / CFBP 6595 / CHA0).